A 118-amino-acid chain; its full sequence is Small ribosomal subunit protein uS13 (118 aa).

The tract at residues 94–118 (SLPVRGQRTKTNARTRKGPRKPIKK) is disordered.

This sequence belongs to the universal ribosomal protein uS13 family. In terms of assembly, part of the 30S ribosomal subunit. Forms a loose heterodimer with protein S19. Forms two bridges to the 50S subunit in the 70S ribosome.

Located at the top of the head of the 30S subunit, it contacts several helices of the 16S rRNA. In the 70S ribosome it contacts the 23S rRNA (bridge B1a) and protein L5 of the 50S subunit (bridge B1b), connecting the 2 subunits; these bridges are implicated in subunit movement. Contacts the tRNAs in the A and P-sites. The sequence is that of Small ribosomal subunit protein uS13 from Actinobacillus pleuropneumoniae serotype 5b (strain L20).